A 765-amino-acid chain; its full sequence is Amyloid beta precursor like protein 2 (765 aa).

The signal sequence occupies residues 1–31 (MAATGTAAAAATGKLLVLLLLGLTAPAAALA). Residues 32–695 (GYIEALAANA…LREDFSLSSS (664 aa)) lie on the Extracellular side of the membrane. The segment at 46–139 (AVAEPQIAMF…PFKCLVGEFV (94 aa)) is GFLD subdomain. An E1 domain is found at 46-205 (AVAEPQIAMF…HGTEYVCCPQ (160 aa)). 6 disulfides stabilise this stretch: Cys-56/Cys-80, Cys-91/Cys-133, Cys-116/Cys-123, Cys-149/Cys-203, Cys-160/Cys-190, and Cys-174/Cys-202. The tract at residues 147–205 (ENCQFFHQERMEVCEKHQRWHTVVKEACLTEGMTLYSYGMLLPCGVDQFHGTEYVCCPQ) is cuBD subdomain. Residues His-163, His-167, and Tyr-184 each contribute to the Cu cation site. The tract at residues 211 to 301 (SDSTMSKEEE…EPSSDGTISD (91 aa)) is disordered. Position 216 is a phosphoserine (Ser-216). Acidic residues-rich tracts occupy residues 218–231 (EEEE…EEDY) and 240–271 (TEAD…EVVE). Residues 272–284 (DRDYYYDSFKGDD) are compositionally biased toward basic and acidic residues. In terms of domain architecture, BPTI/Kunitz inhibitor spans 308–366 (VKAVCSQEAMTGPCRAVMPRWYFDLSKGKCVRFIYGGCGGNRNNFESEDYCMAVCKTMI). 3 disulfides stabilise this stretch: Cys-312/Cys-362, Cys-321/Cys-345, and Cys-337/Cys-358. The E2 domain occupies 375-566 (DVDVYFETSA…QEIQEEIDEL (192 aa)). Residue Ser-592 is modified to Phosphoserine. A disordered region spans residues 597-616 (EIPPFHPFHPFPSLSENEDT). Ser-628 carries O-linked (Xyl...) (chondroitin sulfate) serine glycosylation. The helical transmembrane segment at 696-718 (ALIGLLVIAVAIATVIVISLVML) threads the bilayer. The Cytoplasmic segment spans residues 719–765 (RKRQYGTISHGIVEVHPMLTPEERHLNKMQNHGYENPTYKYLEQMQI). Residues 751–765 (GYENPTYKYLEQMQI) form an interaction with DAB2 region. Positions 752-757 (YENPTY) match the NPXY motif motif.

It belongs to the APP family. As to quaternary structure, interacts with CPEB1. Interacts (via NPXY motif) with DAB2 (via PID domain); the interaction is impaired by tyrosine phosphorylation of the NPXY motif. Interacts (via cytoplasmic domain) with APBB2/FE65L. Interacts (via intracellular domain) with APBB3/FE65L2.

Its subcellular location is the membrane. Its function is as follows. May play a role in the regulation of hemostasis. The soluble form may have inhibitory properties towards coagulation factors. May interact with cellular G-protein signaling pathways. May bind to the DNA 5'-GTCACATG-3'(CDEI box). Inhibits trypsin, chymotrypsin, plasmin, factor XIA and plasma and glandular kallikrein. Modulates the Cu/Zn nitric oxide-catalyzed autodegradation of GPC1 heparan sulfate side chains in fibroblasts. This Rattus norvegicus (Rat) protein is Amyloid beta precursor like protein 2.